We begin with the raw amino-acid sequence, 239 residues long: Pyridoxine 5'-phosphate synthase (239 aa).

Asn-7 is a 3-amino-2-oxopropyl phosphate binding site. 9-10 (DH) provides a ligand contact to 1-deoxy-D-xylulose 5-phosphate. Arg-18 contributes to the 3-amino-2-oxopropyl phosphate binding site. His-43 (proton acceptor) is an active-site residue. 1-deoxy-D-xylulose 5-phosphate contacts are provided by Arg-45 and His-50. Glu-70 (proton acceptor) is an active-site residue. Residue Thr-100 coordinates 1-deoxy-D-xylulose 5-phosphate. His-191 functions as the Proton donor in the catalytic mechanism. Residues Gly-192 and 213 to 214 (GH) contribute to the 3-amino-2-oxopropyl phosphate site.

This sequence belongs to the PNP synthase family. Homooctamer; tetramer of dimers.

The protein localises to the cytoplasm. It catalyses the reaction 3-amino-2-oxopropyl phosphate + 1-deoxy-D-xylulose 5-phosphate = pyridoxine 5'-phosphate + phosphate + 2 H2O + H(+). The protein operates within cofactor biosynthesis; pyridoxine 5'-phosphate biosynthesis; pyridoxine 5'-phosphate from D-erythrose 4-phosphate: step 5/5. Its function is as follows. Catalyzes the complicated ring closure reaction between the two acyclic compounds 1-deoxy-D-xylulose-5-phosphate (DXP) and 3-amino-2-oxopropyl phosphate (1-amino-acetone-3-phosphate or AAP) to form pyridoxine 5'-phosphate (PNP) and inorganic phosphate. In Geotalea daltonii (strain DSM 22248 / JCM 15807 / FRC-32) (Geobacter daltonii), this protein is Pyridoxine 5'-phosphate synthase.